Reading from the N-terminus, the 205-residue chain is LIM domain-containing protein PLIM2b (205 aa).

LIM zinc-binding domains are found at residues 8-68 and 102-162; these read DKCN…LFKE and DKCA…LFME. A disordered region spans residues 177–205; it reads RTASGNTLPPEPTEDVAVEAKEENGVSES. The span at 194-205 shows a compositional bias: basic and acidic residues; sequence VEAKEENGVSES.

Interacts with F-actin. As to expression, predominantly expressed in flowers and in pollen grains. Detected in vasculature and roots.

The protein resides in the cytoplasm. Its subcellular location is the cytoskeleton. Binds to actin filaments and promotes cross-linking into thick bundles. Has an actin-stabilizing activity. The actin regulatory activities are inhibited by pH &gt; 6.8 but are [Ca(2+)] independent. The chain is LIM domain-containing protein PLIM2b from Arabidopsis thaliana (Mouse-ear cress).